We begin with the raw amino-acid sequence, 110 residues long: UPF0122 protein RBAM_015800 (110 aa).

It belongs to the UPF0122 family.

Might take part in the signal recognition particle (SRP) pathway. This is inferred from the conservation of its genetic proximity to ftsY/ffh. May be a regulatory protein. In Bacillus velezensis (strain DSM 23117 / BGSC 10A6 / LMG 26770 / FZB42) (Bacillus amyloliquefaciens subsp. plantarum), this protein is UPF0122 protein RBAM_015800.